Reading from the N-terminus, the 464-residue chain is Integrator complex subunit 12 (464 aa).

Positions Gly-42–Ala-98 are disordered. The segment covering Lys-69–Leu-84 has biased composition (low complexity). Over residues Ala-85–Ala-98 the composition is skewed to basic and acidic residues. The PHD-type zinc finger occupies Gly-156 to Gln-212. Disordered stretches follow at residues Met-216–Lys-252 and Thr-312–Asn-445. The span at Pro-227–Ala-239 shows a compositional bias: low complexity. The span at Thr-312–Lys-329 shows a compositional bias: polar residues. Over residues Ser-339–Leu-371 the composition is skewed to low complexity. Positions Ser-372–Lys-382 are enriched in polar residues. Over residues Gly-384–Asn-421 the composition is skewed to low complexity. Residues Ser-428 to Asn-445 are compositionally biased toward polar residues.

The protein belongs to the Integrator subunit 12 family. Component of the Integrator complex, composed of core subunits INTS1, INTS2, INTS3, INTS4, INTS5, INTS6, INTS7, INTS8, INTS9/RC74, INTS10, INTS11/CPSF3L, INTS12, INTS13, INTS14 and INTS15. The core complex associates with protein phosphatase 2A subunits PPP2CA and PPP2R1A, to form the Integrator-PP2A (INTAC) complex.

It localises to the nucleus. Component of the integrator complex, a multiprotein complex that terminates RNA polymerase II (Pol II) transcription in the promoter-proximal region of genes. The integrator complex provides a quality checkpoint during transcription elongation by driving premature transcription termination of transcripts that are unfavorably configured for transcriptional elongation: the complex terminates transcription by (1) catalyzing dephosphorylation of the C-terminal domain (CTD) of Pol II subunit POLR2A/RPB1 and SUPT5H/SPT5, (2) degrading the exiting nascent RNA transcript via endonuclease activity and (3) promoting the release of Pol II from bound DNA. The integrator complex is also involved in terminating the synthesis of non-coding Pol II transcripts, such as enhancer RNAs (eRNAs), small nuclear RNAs (snRNAs), telomerase RNAs and long non-coding RNAs (lncRNAs). The sequence is that of Integrator complex subunit 12 (ints12) from Xenopus laevis (African clawed frog).